The primary structure comprises 260 residues: MNWTREIEQYKQVVASYKLKMKRMEMKISDISEEKRQSSMLFDPAGTHSDDKEVCEYWRMINYVDQNFNLIGGMIKMHQYCLSVYNKSGSGYFRDGANFFRNADPLNLSNDSKIPIQMVCMNLWTCEKIEIWYRDFYSHRYLEQVDGKEKYDEDQYTVFDQLFDNLGSDASTLMEQQIELMRNYCQAKAELTNMVEFQRGVRFWRMVSPIHLPRNYQLALILAKRNGWVHEDVERWFRVLYDESCCVGARGRDVYLNFGR.

A coiled-coil region spans residues 1-38 (MNWTREIEQYKQVVASYKLKMKRMEMKISDISEEKRQS).

This is an uncharacterized protein from Caenorhabditis elegans.